The primary structure comprises 346 residues: MKIDINLNDDNKNYSVFIDELKNLKFKGKVAVITNSKVGGLYLGEILNLIDADEIFSVCIPDGEQYKNLAMIEYILEQLFVSRLERNSTLIALGGGVISDMTGFAASIYERGINFINIPTTLLAQVDASVGGKTGVNNKFGKNLIGTFYQPKAVYCETKFLNSLPNREFNAGMAEVIKMATMFDKDFFKFIQDNSVENSQILKQIIAKCVEIKAGVVAKDEKESGIRAVLNYGHTFAHVIEMQTNYKKFLHGEAVAIGINMANHLACKLGLLSKKDLDIIEQTLIKFGLPTTYRISDEEVFYDSFFLDKKSENKKIKFILPNGIGSYALRNDIDKNSVLDILRMFK.

NAD(+) contacts are provided by residues 62–67 (DGEQYK), 96–100 (GVISD), 120–121 (TT), lysine 133, and lysine 142. 3 residues coordinate Zn(2+): glutamate 175, histidine 234, and histidine 251.

The protein belongs to the sugar phosphate cyclases superfamily. Dehydroquinate synthase family. Co(2+) is required as a cofactor. The cofactor is Zn(2+). NAD(+) serves as cofactor.

The protein localises to the cytoplasm. The catalysed reaction is 7-phospho-2-dehydro-3-deoxy-D-arabino-heptonate = 3-dehydroquinate + phosphate. Its pathway is metabolic intermediate biosynthesis; chorismate biosynthesis; chorismate from D-erythrose 4-phosphate and phosphoenolpyruvate: step 2/7. Functionally, catalyzes the conversion of 3-deoxy-D-arabino-heptulosonate 7-phosphate (DAHP) to dehydroquinate (DHQ). The chain is 3-dehydroquinate synthase from Campylobacter fetus subsp. fetus (strain 82-40).